We begin with the raw amino-acid sequence, 344 residues long: N-acetyl-gamma-glutamyl-phosphate reductase (344 aa).

Cysteine 148 is an active-site residue.

It belongs to the NAGSA dehydrogenase family. Type 1 subfamily.

The protein resides in the cytoplasm. It catalyses the reaction N-acetyl-L-glutamate 5-semialdehyde + phosphate + NADP(+) = N-acetyl-L-glutamyl 5-phosphate + NADPH + H(+). Its pathway is amino-acid biosynthesis; L-arginine biosynthesis; N(2)-acetyl-L-ornithine from L-glutamate: step 3/4. Catalyzes the NADPH-dependent reduction of N-acetyl-5-glutamyl phosphate to yield N-acetyl-L-glutamate 5-semialdehyde. The polypeptide is N-acetyl-gamma-glutamyl-phosphate reductase (Clostridium kluyveri (strain NBRC 12016)).